We begin with the raw amino-acid sequence, 398 residues long: Acetyl-CoA acetyltransferase (398 aa).

Serine 2 carries the N-acetylserine modification. Cysteine 91 functions as the Acyl-thioester intermediate in the catalytic mechanism. CoA-binding residues include tyrosine 186 and lysine 231. Tyrosine 186 contacts K(+). K(+) is bound by residues alanine 248, alanine 249, and alanine 251. Position 252 (serine 252) interacts with CoA. Valine 350 provides a ligand contact to K(+). Active-site proton acceptor residues include histidine 354 and cysteine 384.

The protein belongs to the thiolase-like superfamily. Thiolase family. As to quaternary structure, homotetramer.

The protein localises to the cytoplasm. It carries out the reaction 2 acetyl-CoA = acetoacetyl-CoA + CoA. It participates in metabolic intermediate biosynthesis; (R)-mevalonate biosynthesis; (R)-mevalonate from acetyl-CoA: step 1/3. Its function is as follows. Acetyl-CoA acetyltransferase; part of the first module of ergosterol biosynthesis pathway that includes the early steps of the pathway, conserved across all eukaryotes, and which results in the formation of mevalonate from acetyl-coenzyme A (acetyl-CoA). In this module, the acetyl-CoA acetyltransferase ERG10 catalyzes the formation of acetoacetyl-CoA. The hydroxymethylglutaryl-CoA synthase ERG13 then condenses acetyl-CoA with acetoacetyl-CoA to form HMG-CoA. The rate-limiting step of the early module is the reduction to mevalonate by the 3-hydroxy-3-methylglutaryl-coenzyme A (HMG-CoA) reductases HMG1 and HMG2 which are derived from a single ancestral HMGR gene by gene duplication. The polypeptide is Acetyl-CoA acetyltransferase (Saccharomyces pastorianus (strain ATCC 76670 / Carlsberg bottom yeast no.2 / CBS 1503 / CLIB 180 / NBRC 10610 / NRRL Y-1525) (Saaz-type lager yeast)).